The primary structure comprises 132 residues: MKSISMLTLAASVAFAVTAGQAVAAGDPAAGEKVFNKCKACHQVGETAKNAVAPELNGIDGRKSASAEGYNYSEPFKALGITWDEAQFKEFIKNPKAKVPGTKMIFPGLSSENDQANVWAYLSQFGADGKKK.

A signal peptide spans M1 to A24. The Cytochrome c domain maps to G26–G126. The heme c site is built by C38, C41, H42, and M104.

In terms of processing, binds 1 heme c group covalently per subunit.

It is found in the periplasm. This Methylosinus trichosporium protein is Cytochrome c-554.